The sequence spans 899 residues: MESKAQEKQEQKKGYNPQDIESRFYAICEKRGYFEIEGNKSLWQGCAPKCFSIMMPPPNVTGVLHIGHALTFTLQDIITRFKRMEGFKTLYQPGLDHAGIATQNVVLKQLLAQGITKESLGREAFIAKVWEWKEQSGGEILNQMRHLGITPAWSRLRFTMDKGLQKAVKKAFVQWYNQGLIVQDNYMVNWCVNDGALSDIEVEYEQNHGKLYYLRYPIKDSAQSLIVATTRPETFFGDTGVMVNPNDERYKHLIGKSVILPLLGREIPIIADSHVDMSFGSGCVKVTPAHDMNDYEVGKRHNLPFITIFDEKGIFNKNAGIFQGQERLESRPLIVQKLQENGFVEKIEDYTNQVGKCYRCGNIVEPYISKQWFVKKETAHNAIQRVNNGELHFYPAQWLNNYNAWMRELKDWCISRQLWWGHRIPVWYCECGNKVASESDNPICPQCQSTITKQDEDVLDTWFSSGLWAFSTLGWGNEDTNTQPPLYHANDLAEFYPNSLLITGFDILFFWVARMILSGESLLDSLPFKDVYLHALVRDENGQKMSKSKGNIIDPMEIISSYGADTLRFTLAILCAQGRDVKLSTQSLEISKNFTNKLYNATNFLNMYLEQLGGKEALKKGFGDINHIHINTPLGQYMLVRFYTATNEVRAALENYRFNDGASILYRFLWGEFCDWGIELAKASKDSIYELGAIFKAALILLHPYMPFITDALWHTLNASDIQTSDSIMIHSYPKAMEKNEQHSQLERTFEVIQDVITSIRRLKAMLELGSTNIECIFVKLNAPFEHSLLEQFVCKLAKVKTLCITQQKPKDCVGDVSKYCECYIQLGEIDLQAIGTRLHNQRQKLEKEITKLQAMLGNENFIKNAPKAVMEQNQSALHNAQEKLDKINAELIALGLQS.

Positions 58 to 68 match the 'HIGH' region motif; it reads PNVTGVLHIGH. A 'KMSKS' region motif is present at residues 544 to 548; sequence KMSKS. K547 provides a ligand contact to ATP. Residues 836–898 are a coiled coil; that stretch reads GTRLHNQRQK…NAELIALGLQ (63 aa).

Belongs to the class-I aminoacyl-tRNA synthetase family. ValS type 1 subfamily. As to quaternary structure, monomer.

The protein localises to the cytoplasm. The enzyme catalyses tRNA(Val) + L-valine + ATP = L-valyl-tRNA(Val) + AMP + diphosphate. Its function is as follows. Catalyzes the attachment of valine to tRNA(Val). As ValRS can inadvertently accommodate and process structurally similar amino acids such as threonine, to avoid such errors, it has a 'posttransfer' editing activity that hydrolyzes mischarged Thr-tRNA(Val) in a tRNA-dependent manner. This Helicobacter hepaticus (strain ATCC 51449 / 3B1) protein is Valine--tRNA ligase.